A 400-amino-acid polypeptide reads, in one-letter code: Gap junction alpha-8 protein (400 aa).

Residues 2–12 lie within the membrane without spanning it; that stretch reads GDWSFLGNILE. Residues 13–21 lie on the Cytoplasmic side of the membrane; sequence QVNEQSTVI. A helical membrane pass occupies residues 22–42; that stretch reads GRVWLTVLFIFRILILGTAAE. Topologically, residues 43–71 are extracellular; sequence LVWGDEQSDFVCNTQQPGCENVCYDEAFP. Cystine bridges form between C54–C196, C61–C190, and C65–C185. A helical transmembrane segment spans residues 72–92; sequence ISHIRLWVLQIIFVSTPSLVY. Residues 93–156 lie on the Cytoplasmic side of the membrane; it reads FGHAVHHVRM…GTLLRTYILH (64 aa). Basic and acidic residues predominate over residues 104-118; it reads EKRKEREEAERRQQA. Residues 104–139 form a disordered region; that stretch reads EKRKEREEAERRQQAEVDEEKLPLAPNQNKGNNPDG. Over residues 129 to 138 the composition is skewed to polar residues; sequence PNQNKGNNPD. A helical transmembrane segment spans residues 157–177; sequence IIFKTLFEVGFIVGQYFLYGF. Topologically, residues 178–205 are extracellular; it reads RILPLYRCGRWPCPNLVDCFVSRPTEKT. Residues 206-226 traverse the membrane as a helical segment; sequence IFIMFMLVVAAVSLFLNLVEI. At 227-400 the chain is on the cytoplasmic side; that stretch reads SHLILKRIRR…SRARSDDLTV (174 aa). Residues 323–400 are disordered; the sequence is YAQAKEPEEE…SRARSDDLTV (78 aa). A compositionally biased stretch (basic and acidic residues) spans 327 to 336; that stretch reads KEPEEEKVKA. Residues 337 to 346 are compositionally biased toward acidic residues; sequence EEEEEQEEEQ. Phosphoserine; by CK2 is present on S364. Over residues 381-392 the composition is skewed to low complexity; sequence RSLSRLSKASSR.

It belongs to the connexin family. Alpha-type (group II) subfamily. As to quaternary structure, a hemichannel or connexon is composed of a hexamer of connexins. A functional gap junction is formed by the apposition of two hemichannels. Forms heteromeric channels with GJA3. During early stages of lens development, interacts with the C-terminus of MIP. Proteolytically cleaved by caspase-3 during lens development. In terms of processing, phosphorylated on Ser-364; which inhibits cleavage by caspase-3.

The protein localises to the cell membrane. Its subcellular location is the cell junction. It is found in the gap junction. In terms of biological role, structural component of eye lens gap junctions. Gap junctions are dodecameric channels that connect the cytoplasm of adjoining cells. They are formed by the docking of two hexameric hemichannels, one from each cell membrane. Small molecules and ions diffuse from one cell to a neighboring cell via the central pore. The sequence is that of Gap junction alpha-8 protein (GJA8) from Gallus gallus (Chicken).